A 368-amino-acid polypeptide reads, in one-letter code: Endophilin-A2 (368 aa).

Positions 1-21 (MSVAGLKKQFYKASQLVSEKV) are membrane-binding amphipathic helix. A BAR domain is found at 18–249 (SEKVGGAEGT…LKRRMREASS (232 aa)). The segment at 60–87 (PNPASRAKLTMLNTVSKIRGQVKNPGYP) is required for dimerization upon membrane association. A coiled-coil region spans residues 181 to 250 (EELRQAMEKF…KRRMREASSR (70 aa)). Residues 218 to 254 (LVDAQLDYHRQAVQILDELADKLKRRMREASSRPKRE) are interaction with ARC. Residues 243–308 (RMREASSRPK…PSRSMPPLDQ (66 aa)) form a disordered region. Positions 245 to 263 (REASSRPKREYKPKPRELL) are enriched in basic and acidic residues. 2 positions are modified to phosphoserine: Ser-288 and Ser-292. Thr-298 is subject to Phosphothreonine. An SH3 domain is found at 306–365 (LDQPSCKALYDFEPENDGELGFHEGDIITLTNQIDENWYEGMLDGQSGFFPLSYVEVLVP). Tyr-315 is modified (phosphotyrosine).

This sequence belongs to the endophilin family. As to quaternary structure, interacts with ARC, SYNJ1 and DNM1. Interacts with PDCD6IP. Interacts with BIN2.

Its subcellular location is the cytoplasm. It is found in the early endosome membrane. The protein resides in the cell projection. The protein localises to the podosome. In terms of biological role, implicated in endocytosis. May recruit other proteins to membranes with high curvature. This is Endophilin-A2 from Bos taurus (Bovine).